Reading from the N-terminus, the 323-residue chain is Estradiol 17 beta-dehydrogenase 5 (323 aa).

NADP(+)-binding positions include 20-24 (GFGTY) and D50. Y55 serves as the catalytic Proton donor. H117 lines the substrate pocket. Residues 166–167 (SN), Q190, 216–221 (YSALGS), and 270–280 (KSFSEKRIKEN) each bind NADP(+).

The protein belongs to the aldo/keto reductase family. In terms of assembly, monomer. Three forms are detected, probably due to post-translational modifications. In terms of tissue distribution, mainly found in liver. Also expressed weakly in kidney.

In terms of biological role, active toward androgens, estrogens, and xenobiotic substrates. Also exhibits low 20 alpha-HSD activity. Shows a-stereospecificity in hydrogen transfer between cofactors and substrates (A-specific). Preferentially catalyzes the reduction of 4-androstenedione, 5-alpha-androstane-3,17-dione, androsterone and dehydroepiandrosterone to testosterone, dihydrotestosterone, 5-alpha-androstane-3-alpha,17-beta-diol and 5-androstene-3-beta,17-beta-diol, respectively. The sequence is that of Estradiol 17 beta-dehydrogenase 5 (Akr1c6) from Mus musculus (Mouse).